Consider the following 493-residue polypeptide: Protein translocase subunit SecY (493 aa).

Over 1–21 (MDSVIRALQPYFERIPSVERP) the chain is Cytoplasmic. The helical transmembrane segment at 22–48 (KGHVHFREKFGWTAAILLLYFILSNVP) threads the bilayer. The Extracellular segment spans residues 49–59 (VFGLSPESIDI). The segment at residues 60 to 67 (FAAYRALF) is an intramembrane region (helical). Residues 60–88 (FAAYRALFAGSTGSIIALGIGPIVTASII) form a discontinuously helical membrane-spanning segment. The stretch at 68 to 79 (AGSTGSIIALGI) is an intramembrane region. An intramembrane region (helical) is located at residues 80–88 (GPIVTASII). Topologically, residues 89-109 (LQLLVGAGIIKLDLTNPEDRA) are cytoplasmic. The chain crosses the membrane as a helical span at residues 110 to 134 (AYQDFQRFLVFVMIAVEAIPQIAGG). Topologically, residues 135–151 (LLKPDLNLAAQLGVSPG) are extracellular. The helical transmembrane segment at 152-176 (IISFLIFIQLFIGGVLIVYMDEVVS) threads the bilayer. Residues 177 to 182 (KWGIGS) are Cytoplasmic-facing. The chain crosses the membrane as a helical span at residues 183–201 (GVSLFILAGIAQSIVVGLF). Over 202–244 (NWVIPPNSAMPAGIIPRWIWIAQNYPLDQLFTGSGLAFLLIQG) the chain is Extracellular. A helical transmembrane segment spans residues 245–266 (GILALITTAAIILLVVFFEGTR). The Cytoplasmic portion of the chain corresponds to 267 to 291 (VEIPLAHAVARGARGRFPIKLIYAS). A helical transmembrane segment spans residues 292–313 (VLPMIFVRALQANVVALGQVLH). Residues 314-367 (ARGVTIFGEFVNGKAVSGLMFFLQPVSSPYDWIPSLVKSQGAAFAAIPDWMIYL) are Extracellular-facing. Residues 368–387 (HLLIDALILVVGGIIFAWFW) traverse the membrane as a helical segment. Topologically, residues 388–430 (VETSGMDARTVASQIAKSGMQVPGFRKSPQVLERVLSRYIPKV) are cytoplasmic. Residues 431 to 449 (TILGGAIIGILTLVANMLG) traverse the membrane as a helical segment. The Extracellular portion of the chain corresponds to 450–454 (TIGNV). The helical transmembrane segment at 455-469 (SGTGLLLAVSIAYRF) threads the bilayer. Residues 470–493 (YEDLAKEQLTEMHPLIRRMLGEEA) lie on the Cytoplasmic side of the membrane.

It belongs to the SecY/SEC61-alpha family. As to quaternary structure, component of the Sec protein translocase complex. Heterotrimer consisting of alpha (SecY), beta (SecG) and gamma (SecE) subunits. The heterotrimers can form oligomers, although 1 heterotrimer is thought to be able to translocate proteins. Interacts with the ribosome. May interact with SecDF, and other proteins may be involved.

The protein resides in the cell membrane. Functionally, the central subunit of the protein translocation channel SecYEG. Consists of two halves formed by TMs 1-5 and 6-10. These two domains form a lateral gate at the front which open onto the bilayer between TMs 2 and 7, and are clamped together by SecE at the back. The channel is closed by both a pore ring composed of hydrophobic SecY resides and a short helix (helix 2A) on the extracellular side of the membrane which forms a plug. The plug probably moves laterally to allow the channel to open. The ring and the pore may move independently. In Archaeoglobus fulgidus (strain ATCC 49558 / DSM 4304 / JCM 9628 / NBRC 100126 / VC-16), this protein is Protein translocase subunit SecY.